A 539-amino-acid polypeptide reads, in one-letter code: Phosphoenolpyruvate carboxykinase (ATP) (539 aa).

The substrate site is built by R61, Y195, and K201. ATP contacts are provided by residues K201, H220, and 238 to 246; that span reads GLSGTGKTT. Positions 201 and 220 each coordinate Mn(2+). A Mn(2+)-binding site is contributed by D259. Residues E287, R325, and T450 each coordinate ATP. A substrate-binding site is contributed by R325.

The protein belongs to the phosphoenolpyruvate carboxykinase (ATP) family. Mn(2+) serves as cofactor.

Its subcellular location is the cytoplasm. It catalyses the reaction oxaloacetate + ATP = phosphoenolpyruvate + ADP + CO2. The protein operates within carbohydrate biosynthesis; gluconeogenesis. Its function is as follows. Involved in the gluconeogenesis. Catalyzes the conversion of oxaloacetate (OAA) to phosphoenolpyruvate (PEP) through direct phosphoryl transfer between the nucleoside triphosphate and OAA. The sequence is that of Phosphoenolpyruvate carboxykinase (ATP) from Methylorubrum populi (strain ATCC BAA-705 / NCIMB 13946 / BJ001) (Methylobacterium populi).